The primary structure comprises 631 residues: 2-isopropylmalate synthase 2, chloroplastic (631 aa).

A chloroplast-targeting transit peptide spans 1–46 (MESSILKSPNLSSPSFGVPSIPALSSSSTSPFSSLHLRSQNHRTIS). One can recognise a Pyruvate carboxyltransferase domain in the interval 87 to 360 (VRIFDTTLRD…FTGIDTRHIV (274 aa)). A divalent metal cation contacts are provided by aspartate 96, histidine 293, and asparagine 329.

Belongs to the alpha-IPM synthase/homocitrate synthase family. LeuA type 1 subfamily. As to quaternary structure, homotetramer. Requires Mg(2+) as cofactor. It depends on Mn(2+) as a cofactor. As to expression, expressed in roots, stems, leaves, flowers and siliques.

The protein localises to the plastid. Its subcellular location is the chloroplast. The enzyme catalyses 3-methyl-2-oxobutanoate + acetyl-CoA + H2O = (2S)-2-isopropylmalate + CoA + H(+). It functions in the pathway amino-acid biosynthesis; L-leucine biosynthesis; L-leucine from 3-methyl-2-oxobutanoate: step 1/4. With respect to regulation, feedback inhibition by Leu. Its function is as follows. Catalyzes the condensation of the acetyl group of acetyl-CoA with 3-methyl-2-oxobutanoate (2-oxoisovalerate) to form 3-carboxy-3-hydroxy-4-methylpentanoate (2-isopropylmalate). Involved in Leu biosynthesis, but does not participate in the chain elongation of glucosinolates. The polypeptide is 2-isopropylmalate synthase 2, chloroplastic (Arabidopsis thaliana (Mouse-ear cress)).